The primary structure comprises 434 residues: MEPSSEQESQESQKVDMEPVFRRESFAALRRNNVAARQLRVVTLNAWCLPQPWPIGSTDRVHRLNKIGQYMIDELYDIVGLQELWSYYDFVRLSEQVSSVYPYFHYFHSGFTGSGVCVFSRHPIVSTLTNRYSLNGFAHHIHRGDWFGGKVVGLTEIEIDGDLRVNFYTTHLHAEYDRENDLYLPHRTAQAFELAQFVRHTARGADVVIVTGDLNMEPCDLGFRLILSHAKLFDAWRMSHEVENEDSEGELLKFRGIAKGGTCDRPDNCYTKRALKNVDDSKRIDYMLFKSGRCNVKLEECEITLNQIPGEDLNYSDHVGLRARFTIDDRFRHEKSVNTWEPNRPLLIEAIGLVAGGERRARTDRIFFFILAVICLILILGSLFFEVFPMGFAVLRFALTVVGVFFVWQGLIGLTLERKALKAAKQAIQQILNN.

Position 83 (E83) interacts with Mg(2+). H318 functions as the Proton acceptor in the catalytic mechanism. 2 helical membrane-spanning segments follow: residues 366–388 (IFFF…FEVF) and 392–414 (FAVL…LIGL).

It belongs to the neutral sphingomyelinase family.

It is found in the membrane. It carries out the reaction an N-(acyl)-sphingosylphosphocholine + H2O = an N-acyl-sphingoid base + phosphocholine + H(+). It catalyses the reaction a sphingomyelin + H2O = phosphocholine + an N-acylsphing-4-enine + H(+). The catalysed reaction is an N-acyl-15-methylhexadecasphing-4-enine-1-phosphocholine + H2O = an N-acyl-15-methylhexadecasphing-4-enine + phosphocholine + H(+). The protein operates within lipid metabolism; sphingolipid metabolism. Functionally, catalyzes the hydrolysis of sphingomyelin producing a ceramide (N-acyl-sphingoid base) and a phosphocholine. C.elegans contain specific sphingoid bases, which are unique or different in structure compared to the sphingoid bases found in other animals. Two examples of these distinctive compounds are: 15-methylhexadecasphinganine and 15-methylhexadecasphing-4-enine. The polypeptide is Putative neutral sphingomyelinase (Caenorhabditis elegans).